Here is an 804-residue protein sequence, read N- to C-terminus: Leucine--tRNA ligase (804 aa).

The 'HIGH' region motif lies at 39 to 50; it reads PYPSGAGLHVGH. Residues 580-584 carry the 'KMSKS' region motif; that stretch reads KMSKS. An ATP-binding site is contributed by lysine 583.

This sequence belongs to the class-I aminoacyl-tRNA synthetase family.

The protein resides in the cytoplasm. The catalysed reaction is tRNA(Leu) + L-leucine + ATP = L-leucyl-tRNA(Leu) + AMP + diphosphate. The polypeptide is Leucine--tRNA ligase (Mycoplasma capricolum subsp. capricolum (strain California kid / ATCC 27343 / NCTC 10154)).